A 131-amino-acid polypeptide reads, in one-letter code: Small ribosomal subunit protein uS8 (131 aa).

This sequence belongs to the universal ribosomal protein uS8 family. As to quaternary structure, part of the 30S ribosomal subunit. Contacts proteins S5 and S12.

In terms of biological role, one of the primary rRNA binding proteins, it binds directly to 16S rRNA central domain where it helps coordinate assembly of the platform of the 30S subunit. The chain is Small ribosomal subunit protein uS8 from Acidovorax sp. (strain JS42).